A 126-amino-acid polypeptide reads, in one-letter code: Fluoride-specific ion channel FluC (126 aa).

4 consecutive transmembrane segments (helical) span residues 3-23 (PLGF…RWGL), 36-56 (YGTL…VGFF), 68-88 (LLAI…SSEA), and 99-119 (WALL…ALGL). Residues Gly76 and Thr79 each contribute to the Na(+) site.

Belongs to the fluoride channel Fluc/FEX (TC 1.A.43) family.

Its subcellular location is the cell inner membrane. It catalyses the reaction fluoride(in) = fluoride(out). With respect to regulation, na(+) is not transported, but it plays an essential structural role and its presence is essential for fluoride channel function. Its function is as follows. Fluoride-specific ion channel. Important for reducing fluoride concentration in the cell, thus reducing its toxicity. The sequence is that of Fluoride-specific ion channel FluC from Cupriavidus pinatubonensis (strain JMP 134 / LMG 1197) (Cupriavidus necator (strain JMP 134)).